Consider the following 382-residue polypeptide: Galactokinase (382 aa).

Position 34-37 (glutamate 34–aspartate 37) interacts with substrate. Glycine 124–serine 130 provides a ligand contact to ATP. Mg(2+) contacts are provided by serine 130 and glutamate 162. Aspartate 174 (proton acceptor) is an active-site residue. A substrate-binding site is contributed by tyrosine 223.

It belongs to the GHMP kinase family. GalK subfamily.

The protein resides in the cytoplasm. The enzyme catalyses alpha-D-galactose + ATP = alpha-D-galactose 1-phosphate + ADP + H(+). It participates in carbohydrate metabolism; galactose metabolism. In terms of biological role, catalyzes the transfer of the gamma-phosphate of ATP to D-galactose to form alpha-D-galactose-1-phosphate (Gal-1-P). In Salmonella choleraesuis (strain SC-B67), this protein is Galactokinase.